Consider the following 491-residue polypeptide: Protein nucleotidyltransferase YdiU (491 aa).

The ATP site is built by G92, G94, R95, K115, D127, G128, R178, and R185. D254 (proton acceptor) is an active-site residue. 2 residues coordinate Mg(2+): N255 and D264. D264 lines the ATP pocket.

Belongs to the SELO family. Requires Mg(2+) as cofactor. The cofactor is Mn(2+).

It catalyses the reaction L-seryl-[protein] + ATP = 3-O-(5'-adenylyl)-L-seryl-[protein] + diphosphate. The enzyme catalyses L-threonyl-[protein] + ATP = 3-O-(5'-adenylyl)-L-threonyl-[protein] + diphosphate. The catalysed reaction is L-tyrosyl-[protein] + ATP = O-(5'-adenylyl)-L-tyrosyl-[protein] + diphosphate. It carries out the reaction L-histidyl-[protein] + UTP = N(tele)-(5'-uridylyl)-L-histidyl-[protein] + diphosphate. It catalyses the reaction L-seryl-[protein] + UTP = O-(5'-uridylyl)-L-seryl-[protein] + diphosphate. The enzyme catalyses L-tyrosyl-[protein] + UTP = O-(5'-uridylyl)-L-tyrosyl-[protein] + diphosphate. Its function is as follows. Nucleotidyltransferase involved in the post-translational modification of proteins. It can catalyze the addition of adenosine monophosphate (AMP) or uridine monophosphate (UMP) to a protein, resulting in modifications known as AMPylation and UMPylation. The polypeptide is Protein nucleotidyltransferase YdiU (Mycolicibacterium paratuberculosis (strain ATCC BAA-968 / K-10) (Mycobacterium paratuberculosis)).